The following is a 124-amino-acid chain: Small ribosomal subunit protein uS12 (124 aa).

Asp89 carries the post-translational modification 3-methylthioaspartic acid.

This sequence belongs to the universal ribosomal protein uS12 family. Part of the 30S ribosomal subunit. Contacts proteins S8 and S17. May interact with IF1 in the 30S initiation complex.

With S4 and S5 plays an important role in translational accuracy. Functionally, interacts with and stabilizes bases of the 16S rRNA that are involved in tRNA selection in the A site and with the mRNA backbone. Located at the interface of the 30S and 50S subunits, it traverses the body of the 30S subunit contacting proteins on the other side and probably holding the rRNA structure together. The combined cluster of proteins S8, S12 and S17 appears to hold together the shoulder and platform of the 30S subunit. The chain is Small ribosomal subunit protein uS12 from Erwinia tasmaniensis (strain DSM 17950 / CFBP 7177 / CIP 109463 / NCPPB 4357 / Et1/99).